The chain runs to 261 residues: Pantothenate synthetase (261 aa).

29-36 (MGALHNGH) provides a ligand contact to ATP. The active-site Proton donor is His36. Gln60 is a (R)-pantoate binding site. Gln60 serves as a coordination point for beta-alanine. Position 147–150 (147–150 (GEKD)) interacts with ATP. A (R)-pantoate-binding site is contributed by Gln153. Position 184-187 (184-187 (LSSR)) interacts with ATP.

Belongs to the pantothenate synthetase family. Homodimer.

The protein localises to the cytoplasm. It carries out the reaction (R)-pantoate + beta-alanine + ATP = (R)-pantothenate + AMP + diphosphate + H(+). The protein operates within cofactor biosynthesis; (R)-pantothenate biosynthesis; (R)-pantothenate from (R)-pantoate and beta-alanine: step 1/1. Functionally, catalyzes the condensation of pantoate with beta-alanine in an ATP-dependent reaction via a pantoyl-adenylate intermediate. This is Pantothenate synthetase from Francisella tularensis subsp. tularensis (strain FSC 198).